The chain runs to 294 residues: Protease HtpX homolog 2 (294 aa).

2 consecutive transmembrane segments (helical) span residues 15–35 (MLFTMFLLAAVYLFFLAFLSY) and 37–57 (GTPPVFMLLFVGAFMGIQYFY). Position 140 (His140) interacts with Zn(2+). Residue Glu141 is part of the active site. Residue His144 coordinates Zn(2+). The next 2 helical transmembrane spans lie at 151–171 (AVLTIASFISTIAFYIVRYSL) and 185–205 (GGILLVWLVSIAVWVVSFLLI). Glu213 is a Zn(2+) binding site.

It belongs to the peptidase M48B family. Requires Zn(2+) as cofactor.

The protein resides in the cell membrane. This Methanosarcina acetivorans (strain ATCC 35395 / DSM 2834 / JCM 12185 / C2A) protein is Protease HtpX homolog 2.